Consider the following 677-residue polypeptide: UPF0652 protein (677 aa).

The B box-type; atypical zinc finger occupies 38–84; that stretch reads ETPGMCCECTDQPAEVVCLQCQDELCTVCSTSLHRRGSRRSHIFKNK. Cysteine 43, cysteine 46, cysteine 66, and histidine 71 together coordinate Zn(2+). Positions 91–111 are enriched in basic and acidic residues; the sequence is YDELNKRDRQPPLHGKEDEKV. 2 disordered regions span residues 91–142 and 156–192; these read YDEL…NNNI and LNPL…IDED. Residues 113–126 show a composition bias toward low complexity; that stretch reads NNNNNNNNTNNTNN. Positions 163-178 are enriched in polar residues; that stretch reads HTNQQRNGGGSNNHQI.

The protein belongs to the UPF0652 family.

The chain is UPF0652 protein from Dictyostelium discoideum (Social amoeba).